The primary structure comprises 554 residues: Glutamine--tRNA ligase (554 aa).

The 'HIGH' region signature appears at 34 to 44; that stretch reads PEPNGYLHIGH. Residues 35 to 37 and 41 to 47 each bind ATP; these read EPN and HIGHAKS. Positions 67 and 212 each coordinate L-glutamine. Residues threonine 231, 261–262, and 269–271 contribute to the ATP site; these read RL and MSK. The 'KMSKS' region motif lies at 268-272; it reads VMSKR. Positions 317–324 are interaction with tRNA; that stretch reads TKQDNTIE.

The protein belongs to the class-I aminoacyl-tRNA synthetase family. As to quaternary structure, monomer.

It is found in the cytoplasm. The enzyme catalyses tRNA(Gln) + L-glutamine + ATP = L-glutaminyl-tRNA(Gln) + AMP + diphosphate. This Escherichia coli O127:H6 (strain E2348/69 / EPEC) protein is Glutamine--tRNA ligase.